The chain runs to 329 residues: Glycerol-3-phosphate dehydrogenase [NAD(P)+] (329 aa).

Positions 13, 14, 34, and 105 each coordinate NADPH. Residues lysine 105, glycine 134, and serine 136 each contribute to the sn-glycerol 3-phosphate site. An NADPH-binding site is contributed by alanine 138. Residues lysine 189, aspartate 242, serine 252, arginine 253, and asparagine 254 each coordinate sn-glycerol 3-phosphate. Catalysis depends on lysine 189, which acts as the Proton acceptor. Arginine 253 is a binding site for NADPH. Residues valine 277 and glutamate 279 each contribute to the NADPH site.

The protein belongs to the NAD-dependent glycerol-3-phosphate dehydrogenase family.

It is found in the cytoplasm. The catalysed reaction is sn-glycerol 3-phosphate + NAD(+) = dihydroxyacetone phosphate + NADH + H(+). It catalyses the reaction sn-glycerol 3-phosphate + NADP(+) = dihydroxyacetone phosphate + NADPH + H(+). The protein operates within membrane lipid metabolism; glycerophospholipid metabolism. In terms of biological role, catalyzes the reduction of the glycolytic intermediate dihydroxyacetone phosphate (DHAP) to sn-glycerol 3-phosphate (G3P), the key precursor for phospholipid synthesis. In Legionella pneumophila (strain Corby), this protein is Glycerol-3-phosphate dehydrogenase [NAD(P)+].